The sequence spans 265 residues: Metallo-beta-lactamase VIM-7 (265 aa).

A signal peptide spans 1-17 (MFQIRSFLVGISAFVMA). Residues His-113, His-115, Asp-117, His-178, Cys-197, and His-239 each coordinate Zn(2+).

Belongs to the metallo-beta-lactamase superfamily. Class-B beta-lactamase family. As to quaternary structure, monomer. Zn(2+) serves as cofactor.

It is found in the periplasm. The catalysed reaction is a beta-lactam + H2O = a substituted beta-amino acid. Functionally, class B beta-lactamase which confers resistance to the beta-lactam antibiotics, including penicillins, cephalosporins and carbapenems. Acts via hydrolysis of the beta-lactam ring. Has penicillin-, cephalosporin- and carbapenem-hydrolyzing activities. This Pseudomonas aeruginosa protein is Metallo-beta-lactamase VIM-7.